The following is a 107-amino-acid chain: Heme-degrading monooxygenase (107 aa).

The 93-residue stretch at 2 to 94 (IIVTNTAKIT…YILDNKIAYY (93 aa)) folds into the ABM domain. Residue Asn6 participates in Fe cation binding. Residue His76 participates in heme binding.

It belongs to the antibiotic biosynthesis monooxygenase family. Heme-degrading monooxygenase IsdG subfamily. Homodimer.

Its subcellular location is the cytoplasm. It carries out the reaction heme b + 3 reduced [NADPH--hemoprotein reductase] + 3 O2 = biliverdin IXalpha + CO + Fe(2+) + 3 oxidized [NADPH--hemoprotein reductase] + 3 H2O + H(+). Functionally, allows bacterial pathogens to use the host heme as an iron source. Catalyzes the oxidative degradation of the heme macrocyclic porphyrin ring to the biliverdin in the presence of a suitable electron donor such as ascorbate or NADPH--cytochrome P450 reductase, with subsequent release of free iron. This Bacillus cereus (strain ATCC 14579 / DSM 31 / CCUG 7414 / JCM 2152 / NBRC 15305 / NCIMB 9373 / NCTC 2599 / NRRL B-3711) protein is Heme-degrading monooxygenase.